The primary structure comprises 490 residues: GTPase Der (490 aa).

The region spanning 3 to 166 is the EngA-type G 1 domain; sequence PVIALVGRPN…IALSEFPKDD (164 aa). GTP is bound by residues 9–16, 56–60, and 118–121; these read GRPNVGKS, DTGGI, and NKVD. The interval 164 to 191 is disordered; that stretch reads KDDADEPEEGEEEIVAEGEEAKRIPGPS. Acidic residues predominate over residues 166–181; it reads DADEPEEGEEEIVAEG. Basic and acidic residues predominate over residues 182–191; the sequence is EEAKRIPGPS. Residues 196 to 369 enclose the EngA-type G 2 domain; sequence IKIAIIGRPN…SVQNSFKSAV (174 aa). Residues 202-209, 249-253, and 314-317 contribute to the GTP site; these read GRPNVGKS, DTAGV, and NKWD. Positions 370 to 454 constitute a KH-like domain; sequence TRWPTSRLTQ…PIRIEFKGGE (85 aa). A disordered region spans residues 452–490; that stretch reads GGENPYEGNKNTLTDRQVNKKRRLMSHHKKADKKRRDKR. The span at 470–490 shows a compositional bias: basic residues; it reads NKKRRLMSHHKKADKKRRDKR.

The protein belongs to the TRAFAC class TrmE-Era-EngA-EngB-Septin-like GTPase superfamily. EngA (Der) GTPase family. In terms of assembly, associates with the 50S ribosomal subunit.

Its function is as follows. GTPase that plays an essential role in the late steps of ribosome biogenesis. The polypeptide is GTPase Der (Pseudomonas fluorescens (strain ATCC BAA-477 / NRRL B-23932 / Pf-5)).